A 271-amino-acid chain; its full sequence is Formamidopyrimidine-DNA glycosylase (271 aa).

Pro-2 (schiff-base intermediate with DNA) is an active-site residue. The Proton donor role is filled by Glu-3. Lys-57 acts as the Proton donor; for beta-elimination activity in catalysis. Residues His-90, Arg-109, and Lys-151 each coordinate DNA. The segment at His-236 to Thr-270 adopts an FPG-type zinc-finger fold. Arg-260 serves as the catalytic Proton donor; for delta-elimination activity.

Belongs to the FPG family. As to quaternary structure, monomer. Requires Zn(2+) as cofactor.

The catalysed reaction is Hydrolysis of DNA containing ring-opened 7-methylguanine residues, releasing 2,6-diamino-4-hydroxy-5-(N-methyl)formamidopyrimidine.. It catalyses the reaction 2'-deoxyribonucleotide-(2'-deoxyribose 5'-phosphate)-2'-deoxyribonucleotide-DNA = a 3'-end 2'-deoxyribonucleotide-(2,3-dehydro-2,3-deoxyribose 5'-phosphate)-DNA + a 5'-end 5'-phospho-2'-deoxyribonucleoside-DNA + H(+). In terms of biological role, involved in base excision repair of DNA damaged by oxidation or by mutagenic agents. Acts as a DNA glycosylase that recognizes and removes damaged bases. Has a preference for oxidized purines, such as 7,8-dihydro-8-oxoguanine (8-oxoG). Has AP (apurinic/apyrimidinic) lyase activity and introduces nicks in the DNA strand. Cleaves the DNA backbone by beta-delta elimination to generate a single-strand break at the site of the removed base with both 3'- and 5'-phosphates. The sequence is that of Formamidopyrimidine-DNA glycosylase from Shewanella baltica (strain OS155 / ATCC BAA-1091).